A 497-amino-acid chain; its full sequence is WASH complex subunit homolog 1 (497 aa).

Residues 306–497 form a disordered region; the sequence is EASEPTEAEA…PPNFDDEEWD (192 aa). Residues 323 to 339 show a composition bias toward pro residues; it reads LPPPPPPMKLDPSPQPA. Low complexity predominate over residues 341 to 350; it reads TPVEITEIPP. Residues 351-372 show a composition bias toward pro residues; sequence IISPPAPPPPPPPPPPPPPPQT. The 23-residue stretch at 390-412 folds into the WH2 domain; sequence GRSDLMAAIRAAGGAGNAKLSRI.

The protein belongs to the WASH1 family. As to quaternary structure, component of the WASH core complex. Component of the DHIC (ddl-1-containing hsf-1 inhibitory) complex, which contains at least ddl-1, ddl-2, hsb-1 and hsf-1. Within the complex, interacts with ddl-1. Formation of the DHIC may be dependent upon the Insulin/IGF-1-like signaling (IIS) mediated pathway. In terms of tissue distribution, expressed in several neurons located throughout the body.

Its function is as follows. Acts as a component of the WASH core complex that functions as a nucleation-promoting factor (NPF) at the surface of endosomes, where it recruits and activates the Arp2/3 complex to induce actin polymerization, playing a key role in the fission of tubules that serve as transport intermediates during endosome sorting. Acts as a component of the DHIC (ddl-1-containing hsf-1 inhibitory complex) which modulates lifespan by sequestering the heat shock transcription factor hsf-1 to negatively regulate its binding to DNA and its transcriptional activity. The sequence is that of WASH complex subunit homolog 1 from Caenorhabditis elegans.